A 206-amino-acid polypeptide reads, in one-letter code: Ras-related protein RABG3e (206 aa).

15–22 (GDSGVGKT) contributes to the GTP binding site. Positions 37–45 (YKATIGADF) match the Effector region motif. Residues 63-67 (DTAGQ), 125-128 (NKID), and 158-159 (SA) contribute to the GTP site. Residues cysteine 204 and cysteine 206 are each lipidated (S-geranylgeranyl cysteine). Cysteine 206 is subject to Cysteine methyl ester.

The protein belongs to the small GTPase superfamily. Rab family.

It is found in the cell membrane. Its function is as follows. Intracellular vesicle trafficking and protein transport. May play a role in adaptation to stress by recylcing macromolecules in specific cellular compartments. This chain is Ras-related protein RABG3e (RABG3E), found in Arabidopsis thaliana (Mouse-ear cress).